We begin with the raw amino-acid sequence, 372 residues long: Glutamate 5-kinase (372 aa).

An ATP-binding site is contributed by K14. Residues S54, D141, and N153 each contribute to the substrate site. 173–174 (TD) lines the ATP pocket. The PUA domain maps to 280–358 (RGTLVLDEGA…DAIVGVLGYM (79 aa)).

This sequence belongs to the glutamate 5-kinase family.

It localises to the cytoplasm. It catalyses the reaction L-glutamate + ATP = L-glutamyl 5-phosphate + ADP. Its pathway is amino-acid biosynthesis; L-proline biosynthesis; L-glutamate 5-semialdehyde from L-glutamate: step 1/2. Functionally, catalyzes the transfer of a phosphate group to glutamate to form L-glutamate 5-phosphate. This is Glutamate 5-kinase from Pseudomonas fluorescens (strain ATCC BAA-477 / NRRL B-23932 / Pf-5).